Consider the following 285-residue polypeptide: Small ribosomal subunit protein mS23 (285 aa).

It belongs to the mitochondrion-specific ribosomal protein mS23 family. In terms of assembly, component of the mitochondrial small ribosomal subunit.

The protein localises to the mitochondrion. The sequence is that of Small ribosomal subunit protein mS23 (RSM25) from Debaryomyces hansenii (strain ATCC 36239 / CBS 767 / BCRC 21394 / JCM 1990 / NBRC 0083 / IGC 2968) (Yeast).